Reading from the N-terminus, the 391-residue chain is Carbamoyl phosphate synthase small chain (391 aa).

The tract at residues 1–199 is CPSase; the sequence is MVRISGFCCA…TWEFIEGPTT (199 aa). L-glutamine contacts are provided by serine 61, glycine 251, and glycine 253. Positions 203-388 constitute a Glutamine amidotransferase type-1 domain; the sequence is TVVAIDFGVK…VALMRDRQPT (186 aa). The Nucleophile role is filled by cysteine 279. Residues leucine 280, glutamine 283, asparagine 319, glycine 321, and phenylalanine 322 each coordinate L-glutamine. Catalysis depends on residues histidine 361 and glutamate 363.

Belongs to the CarA family. Composed of two chains; the small (or glutamine) chain promotes the hydrolysis of glutamine to ammonia, which is used by the large (or ammonia) chain to synthesize carbamoyl phosphate. Tetramer of heterodimers (alpha,beta)4.

The catalysed reaction is hydrogencarbonate + L-glutamine + 2 ATP + H2O = carbamoyl phosphate + L-glutamate + 2 ADP + phosphate + 2 H(+). The enzyme catalyses L-glutamine + H2O = L-glutamate + NH4(+). The protein operates within amino-acid biosynthesis; L-arginine biosynthesis; carbamoyl phosphate from bicarbonate: step 1/1. It functions in the pathway pyrimidine metabolism; UMP biosynthesis via de novo pathway; (S)-dihydroorotate from bicarbonate: step 1/3. Functionally, small subunit of the glutamine-dependent carbamoyl phosphate synthetase (CPSase). CPSase catalyzes the formation of carbamoyl phosphate from the ammonia moiety of glutamine, carbonate, and phosphate donated by ATP, constituting the first step of 2 biosynthetic pathways, one leading to arginine and/or urea and the other to pyrimidine nucleotides. The small subunit (glutamine amidotransferase) binds and cleaves glutamine to supply the large subunit with the substrate ammonia. This Synechococcus sp. (strain ATCC 27144 / PCC 6301 / SAUG 1402/1) (Anacystis nidulans) protein is Carbamoyl phosphate synthase small chain.